A 203-amino-acid polypeptide reads, in one-letter code: Small ribosomal subunit protein uS3 (203 aa).

The 75-residue stretch at 39 to 113 (IREIIRRNFL…NHVLNAKNIA (75 aa)) folds into the KH type-2 domain.

The protein belongs to the universal ribosomal protein uS3 family. As to quaternary structure, part of the 30S ribosomal subunit. Forms a tight complex with proteins S10 and S14.

Its function is as follows. Binds the lower part of the 30S subunit head. Binds mRNA in the 70S ribosome, positioning it for translation. In Carsonella ruddii, this protein is Small ribosomal subunit protein uS3.